The sequence spans 197 residues: dITP/XTP pyrophosphatase (197 aa).

Substrate is bound at residue 10 to 15 (TKNQGK). The Proton acceptor role is filled by D70. D70 is a Mg(2+) binding site. Residues S71, 151–154 (FGYD), K173, and 178–179 (HR) each bind substrate.

Belongs to the HAM1 NTPase family. As to quaternary structure, homodimer. It depends on Mg(2+) as a cofactor.

The catalysed reaction is XTP + H2O = XMP + diphosphate + H(+). The enzyme catalyses dITP + H2O = dIMP + diphosphate + H(+). It carries out the reaction ITP + H2O = IMP + diphosphate + H(+). Its function is as follows. Pyrophosphatase that catalyzes the hydrolysis of nucleoside triphosphates to their monophosphate derivatives, with a high preference for the non-canonical purine nucleotides XTP (xanthosine triphosphate), dITP (deoxyinosine triphosphate) and ITP. Seems to function as a house-cleaning enzyme that removes non-canonical purine nucleotides from the nucleotide pool, thus preventing their incorporation into DNA/RNA and avoiding chromosomal lesions. This Symbiobacterium thermophilum (strain DSM 24528 / JCM 14929 / IAM 14863 / T) protein is dITP/XTP pyrophosphatase.